A 384-amino-acid polypeptide reads, in one-letter code: D-galactosamine-6-phosphate deaminase AgaS (384 aa).

SIS domains are found at residues 45–197 and 215–364; these read LEPL…SQTF and SEGV…PDTP.

Belongs to the SIS family. AgaS subfamily.

It carries out the reaction D-galactosamine 6-phosphate + H2O = D-tagatopyranose 1-phosphate + NH4(+). Its function is as follows. Catalyzes the isomerization-deamination of galactosamine 6-phosphate to form tagatofuranose 6-phosphate and ammonium ion. This chain is D-galactosamine-6-phosphate deaminase AgaS, found in Escherichia coli.